We begin with the raw amino-acid sequence, 141 residues long: Acetyltransferase YpeA (141 aa).

The region spanning 1 to 141 (MEIRVFRQED…GKRLIEDEEY (141 aa)) is the N-acetyltransferase domain.

It belongs to the acetyltransferase family. YpeA subfamily.

The protein is Acetyltransferase YpeA of Salmonella choleraesuis (strain SC-B67).